We begin with the raw amino-acid sequence, 91 residues long: Small integral membrane protein 12-B (91 aa).

A helical transmembrane segment spans residues Tyr12 to Phe34.

Belongs to the SMIM12 family.

It localises to the membrane. The protein is Small integral membrane protein 12-B (smim12-b) of Xenopus laevis (African clawed frog).